Reading from the N-terminus, the 471-residue chain is UDP-N-acetylmuramate--L-alanine ligase (471 aa).

114–120 (GTHGKTT) contributes to the ATP binding site.

This sequence belongs to the MurCDEF family.

It is found in the cytoplasm. The enzyme catalyses UDP-N-acetyl-alpha-D-muramate + L-alanine + ATP = UDP-N-acetyl-alpha-D-muramoyl-L-alanine + ADP + phosphate + H(+). Its pathway is cell wall biogenesis; peptidoglycan biosynthesis. In terms of biological role, cell wall formation. In Brucella abortus (strain S19), this protein is UDP-N-acetylmuramate--L-alanine ligase.